We begin with the raw amino-acid sequence, 380 residues long: Pregnancy-associated glycoprotein 1 (380 aa).

The N-terminal stretch at 1-15 (MKWLVLLGLVAFSEC) is a signal peptide. A propeptide spans 16-53 (IVKIPLRRLKTMRNVVSGKNMLNNFLKEHAYSLSQISF) (activation peptide). N-linked (GlcNAc...) asparagine glycosylation is found at asparagine 57 and asparagine 74. In terms of domain architecture, Peptidase A1 spans 71 to 377 (YMGNITIGTP…DRGNDRIGLA (307 aa)). Aspartate 89 is a catalytic residue. Cysteine 102 and cysteine 107 are oxidised to a cystine. N-linked (GlcNAc...) asparagine glycans are attached at residues asparagine 125 and asparagine 182. A disulfide bond links cysteine 261 and cysteine 265. Aspartate 270 is a catalytic residue. Cysteine 303 and cysteine 337 are oxidised to a cystine.

Belongs to the peptidase A1 family. N-Glycosylated; the glycans terminate in either N-acetyl-galactosamine (GalNAc) or N-acetyllactosamine. Terminal GalNAc on Asn-linked glycans is greatly reduced prior to parturition while lactosamine-type N-glycans remain unaltered. Trophoblast and placental tissue. Produced specifically in the invasive binucleate cells of the placenta. Becomes detectable in maternal serum soon after implantation.

The protein localises to the secreted. Its subcellular location is the extracellular space. Its function is as follows. Appears to be proteolytically inactive. This Bos taurus (Bovine) protein is Pregnancy-associated glycoprotein 1.